A 369-amino-acid polypeptide reads, in one-letter code: Glutamate 5-kinase (369 aa).

Residue Lys8 participates in ATP binding. Substrate contacts are provided by Ser49, Asp136, and Asn148. ATP-binding positions include 168–169 (TD) and 212–218 (TGGMMTK). Residues 277–355 (TGKLYLDSGA…KEISTILGYV (79 aa)) form the PUA domain.

Belongs to the glutamate 5-kinase family.

The protein resides in the cytoplasm. It catalyses the reaction L-glutamate + ATP = L-glutamyl 5-phosphate + ADP. It functions in the pathway amino-acid biosynthesis; L-proline biosynthesis; L-glutamate 5-semialdehyde from L-glutamate: step 1/2. In terms of biological role, catalyzes the transfer of a phosphate group to glutamate to form L-glutamate 5-phosphate. This is Glutamate 5-kinase from Trichormus variabilis (strain ATCC 29413 / PCC 7937) (Anabaena variabilis).